Consider the following 161-residue polypeptide: Transcriptional repressor NrdR (161 aa).

The segment at 3-34 is a zinc-finger region; the sequence is CPYCGARDARVIDSRELNGGESIRRRRECIAC. The 91-residue stretch at 49–139 folds into the ATP-cone domain; it reads LMVVKRDGRR…VYRRFADLED (91 aa).

Belongs to the NrdR family. Zn(2+) serves as cofactor.

Negatively regulates transcription of bacterial ribonucleotide reductase nrd genes and operons by binding to NrdR-boxes. In Thermomicrobium roseum (strain ATCC 27502 / DSM 5159 / P-2), this protein is Transcriptional repressor NrdR.